The primary structure comprises 382 residues: Lipid-A-disaccharide synthase (382 aa).

It belongs to the LpxB family.

It catalyses the reaction 2-N,3-O-bis[(3R)-3-hydroxytetradecanoyl]-alpha-D-glucosaminyl 1-phosphate + UDP-2-N,3-O-bis[(3R)-3-hydroxytetradecanoyl]-alpha-D-glucosamine = lipid A disaccharide (E. coli) + UDP + H(+). The enzyme catalyses a lipid X + a UDP-2-N,3-O-bis[(3R)-3-hydroxyacyl]-alpha-D-glucosamine = a lipid A disaccharide + UDP + H(+). It functions in the pathway glycolipid biosynthesis; lipid IV(A) biosynthesis; lipid IV(A) from (3R)-3-hydroxytetradecanoyl-[acyl-carrier-protein] and UDP-N-acetyl-alpha-D-glucosamine: step 5/6. Condensation of UDP-2,3-diacylglucosamine and 2,3-diacylglucosamine-1-phosphate to form lipid A disaccharide, a precursor of lipid A, a phosphorylated glycolipid that anchors the lipopolysaccharide to the outer membrane of the cell. In Escherichia coli (strain 55989 / EAEC), this protein is Lipid-A-disaccharide synthase.